A 322-amino-acid chain; its full sequence is NADH-quinone oxidoreductase subunit H (322 aa).

The next 8 helical transmembrane spans lie at 12–32, 79–99, 111–131, 151–171, 183–203, 234–254, 262–282, and 301–321; these read IGKALIVLVGIVGAGAFMSFI, IFILAPIIAFTAFILAFAVVP, VGLLYILAIAGLAVYAVLFAG, LSYEVFLGLSLMGIVIQTGSF, LWNVVPQFLGFITFLFAGVAV, FFVGEYIGIVLISSLIVTLFF, LPPFFWFALKTACFMVFFILL, and VCLPLTLINMLITAAVVLMNV.

This sequence belongs to the complex I subunit 1 family. NDH-1 is composed of 13 different subunits. Subunits NuoA, H, J, K, L, M, N constitute the membrane sector of the complex.

The protein localises to the cell inner membrane. The enzyme catalyses a quinone + NADH + 5 H(+)(in) = a quinol + NAD(+) + 4 H(+)(out). Its function is as follows. NDH-1 shuttles electrons from NADH, via FMN and iron-sulfur (Fe-S) centers, to quinones in the respiratory chain. The immediate electron acceptor for the enzyme in this species is believed to be ubiquinone. Couples the redox reaction to proton translocation (for every two electrons transferred, four hydrogen ions are translocated across the cytoplasmic membrane), and thus conserves the redox energy in a proton gradient. This subunit may bind ubiquinone. The polypeptide is NADH-quinone oxidoreductase subunit H (Shewanella oneidensis (strain ATCC 700550 / JCM 31522 / CIP 106686 / LMG 19005 / NCIMB 14063 / MR-1)).